The sequence spans 462 residues: FAD-dependent monooxygenase opaC (462 aa).

An N-linked (GlcNAc...) asparagine glycan is attached at N10. The chain crosses the membrane as a helical span at residues 14–34 (ITVIIIGLGIGGLTAAISCHL). D43 serves as a coordination point for FAD. An N-linked (GlcNAc...) asparagine glycan is attached at N60. R115 is an FAD binding site. R193 is a catalytic residue. FAD contacts are provided by D322 and A335.

Belongs to the paxM FAD-dependent monooxygenase family. Requires FAD as cofactor.

It localises to the membrane. Its pathway is secondary metabolite biosynthesis. FAD-dependent monooxygenase; part of the gene cluster that mediates the biosynthesis of oxepinamides, derivatives of anthranilyl-containing tripeptides that share an oxepin ring and a fused pyrimidinone moiety. The nonribosomal peptide synthetase (NRPS) opaA assembles the quinazolinone core with D-Phe incorporation. The first adenylation domain (A1) of opaA loads and activates anthranilic acid whereas the second A domain (A2) is for activating of L-Phe, which is then converted to D-form by the E domain. The third A domain (A3) is responsible for L-Ile activation and the terminal condensation domain C3 for cyclization and releasing the NRPS product protuboxepin K. The cytochrome P450 monooxygenase opaB then catalyzes alone the oxepin ring formation to convert protuboxepin K into protuboxepin A. The flavoenzyme opaC installs subsequently one hydroxyl group at the oxepin ring, accompanied by double bond migration, to form 15-epi-oxepinamide E. The epimerase opaE changes the D-Phe residue back to L-form, leading to oxepinamide E, which is further methylated at the hydroxyl group at C-12 by the O-methyltransferase OpaF to yield oxepinamide F. This Aspergillus ustus protein is FAD-dependent monooxygenase opaC.